The chain runs to 849 residues: Pre-mRNA-processing ATP-dependent RNA helicase PRP5 (849 aa).

Residues 13–81 (ESLLEERRKK…RKRKNEFRKS (69 aa)) adopt a coiled-coil conformation. The segment at 28–138 (QKKAQFDAQK…PEHDNEKDPL (111 aa)) is disordered. Positions 38–54 (ENQTSRNDIVTNSLEGK) are enriched in polar residues. The span at 55-85 (QTTEKFTERQERVKEELRKRKNEFRKSDEPV) shows a compositional bias: basic and acidic residues. Over residues 89–102 (PSKKKSKRSKVKKK) the composition is skewed to basic residues. Residues 120–138 (RSKEHIQKVPEHDNEKDPL) show a composition bias toward basic and acidic residues. A Q motif motif is present at residues 255–284 (TKWSQLGLSTDTMVLITEKLHFGSLTPIQS). Residues 287 to 467 (LPAIMSGRDV…VRVLHSPISI (181 aa)) form the Helicase ATP-binding domain. 300 to 307 (SKTGSGKT) lines the ATP pocket. The DEAD box signature appears at 415–418 (DEAD). One can recognise a Helicase C-terminal domain in the interval 502–661 (ERSEFFDEVQ…LDPLQAKELQ (160 aa)). A compositionally biased stretch (basic and acidic residues) spans 689 to 728 (NIKSKREEAQNKDLELKKNDKRSDDLEKKINNPHEGHDSE). Residues 689–731 (NIKSKREEAQNKDLELKKNDKRSDDLEKKINNPHEGHDSEPES) are disordered.

Belongs to the DEAD box helicase family. DDX46/PRP5 subfamily. Interacts with the U2 snRNP and HSH155.

It localises to the nucleus. It catalyses the reaction ATP + H2O = ADP + phosphate + H(+). In terms of biological role, ATP-dependent RNA helicase involved spliceosome assembly and in nuclear splicing. Catalyzes an ATP-dependent conformational change of U2 snRNP. Bridges U1 and U2 snRNPs and enables stable U2 snRNP association with intron RNA. The polypeptide is Pre-mRNA-processing ATP-dependent RNA helicase PRP5 (PRP5) (Saccharomyces cerevisiae (strain YJM789) (Baker's yeast)).